A 337-amino-acid polypeptide reads, in one-letter code: uncharacterized protein (337 aa).

A run of 2 helical transmembrane segments spans residues 4–24 (FIFF…FSLI) and 26–46 (LLLW…LFAL).

It belongs to the plectrovirus ORF2 family.

Its subcellular location is the host membrane. This is an uncharacterized protein from Spiroplasma melliferum (SpV1).